A 1218-amino-acid polypeptide reads, in one-letter code: ATP-dependent helicase/deoxyribonuclease subunit B (1218 aa).

Residues 1–279 (MRFIVGRAGT…VFLTETHRFE (279 aa)) enclose the UvrD-like helicase ATP-binding domain. 6–13 (GRAGTGKS) provides a ligand contact to ATP. Positions 281–588 (AGLKHLERFY…LVGSLDRSRN (308 aa)) constitute a UvrD-like helicase C-terminal domain. A [4Fe-4S] cluster-binding site is contributed by cysteine 786. Positions 987–1006 (LAEGSKGSEGSEGSEDSEDS) are disordered. The [4Fe-4S] cluster site is built by cysteine 1126, cysteine 1129, and cysteine 1135. The segment covering 1160 to 1169 (RVQSQDSEQY) has biased composition (polar residues). The disordered stretch occupies residues 1160 to 1218 (RVQSQDSEQYPEQHPPTSVPGETSRRALQKDGGNSPRGQELIWLGEDEAGAGKEDDGHE). The segment covering 1209–1218 (GAGKEDDGHE) has biased composition (basic and acidic residues).

The protein belongs to the helicase family. AddB/RexB type 1 subfamily. In terms of assembly, heterodimer of AddA and AddB. It depends on Mg(2+) as a cofactor. Requires [4Fe-4S] cluster as cofactor.

In terms of biological role, the heterodimer acts as both an ATP-dependent DNA helicase and an ATP-dependent, dual-direction single-stranded exonuclease. Recognizes the chi site generating a DNA molecule suitable for the initiation of homologous recombination. The AddB subunit has 5' -&gt; 3' nuclease activity but not helicase activity. The protein is ATP-dependent helicase/deoxyribonuclease subunit B of Desulfitobacterium hafniense (strain DSM 10664 / DCB-2).